The chain runs to 441 residues: Homoserine dehydrogenase (441 aa).

NADP(+) contacts are provided by Asn17 and Val18. 3 residues coordinate NAD(+): Val18, Val37, and Gly47. Val18 serves as a coordination point for NADPH. Residues Arg49, Arg50, and Lys107 each coordinate NADP(+). Arg49 provides a ligand contact to NADPH. Lys107 is an NADPH binding site. Na(+) is bound by residues Glu131, Val134, Gly136, and Ile138. Residues Gly189 and Glu192 each coordinate NADP(+). L-homoserine contacts are provided by Glu192 and Asp203. The active-site Proton donor is Lys207. Gly309 is a binding site for NADP(+). Gly309 is a binding site for NAD(+). Gly309 contacts NADPH. In terms of domain architecture, ACT spans Tyr356–Arg435.

This sequence belongs to the homoserine dehydrogenase family. A metal cation is required as a cofactor.

The enzyme catalyses L-homoserine + NADP(+) = L-aspartate 4-semialdehyde + NADPH + H(+). It catalyses the reaction L-homoserine + NAD(+) = L-aspartate 4-semialdehyde + NADH + H(+). Its pathway is amino-acid biosynthesis; L-methionine biosynthesis via de novo pathway; L-homoserine from L-aspartate: step 3/3. The protein operates within amino-acid biosynthesis; L-threonine biosynthesis; L-threonine from L-aspartate: step 3/5. Functionally, catalyzes the conversion of L-aspartate-beta-semialdehyde (L-Asa) to L-homoserine (L-Hse), the third step in the biosynthesis of threonine and methionine from aspartate. The protein is Homoserine dehydrogenase (hom) of Mycobacterium tuberculosis (strain CDC 1551 / Oshkosh).